A 682-amino-acid polypeptide reads, in one-letter code: Potassium-transporting ATPase ATP-binding subunit (682 aa).

Transmembrane regions (helical) follow at residues 34–54 (PVMF…IAMA), 62–82 (ALFS…ANFA), 219–239 (IALT…TATL), and 254–274 (VLVA…LSAI). The active-site 4-aspartylphosphate intermediate is the D307. Residues D344, E348, 377–384 (FTAQSRMS), and K395 contribute to the ATP site. D518 and D522 together coordinate Mg(2+). 3 helical membrane-spanning segments follow: residues 588–608 (FAII…LNIM), 616–636 (AILS…PLAL), and 656–676 (IYGL…DLLL).

It belongs to the cation transport ATPase (P-type) (TC 3.A.3) family. Type IA subfamily. The system is composed of three essential subunits: KdpA, KdpB and KdpC.

The protein resides in the cell inner membrane. The enzyme catalyses K(+)(out) + ATP + H2O = K(+)(in) + ADP + phosphate + H(+). Its function is as follows. Part of the high-affinity ATP-driven potassium transport (or Kdp) system, which catalyzes the hydrolysis of ATP coupled with the electrogenic transport of potassium into the cytoplasm. This subunit is responsible for energy coupling to the transport system and for the release of the potassium ions to the cytoplasm. The chain is Potassium-transporting ATPase ATP-binding subunit from Escherichia coli O17:K52:H18 (strain UMN026 / ExPEC).